Consider the following 481-residue polypeptide: NADH-quinone oxidoreductase subunit N (481 aa).

13 helical membrane passes run 14–34 (LILSVGALLLLLVAAFGGDGF), 38–57 (IGWGAVALFAAAGFSLTGPA), 76–96 (FAKLLIYIAAAVSVAVAPGFF), 108–128 (PVLILLSGVGMGMMVSAGDLL), 162–182 (FVLGALASGILLYGISLLYGF), 204–224 (MFGMVFVFAGLAFKISAVPFH), 235–255 (PTPVTAFFASAPKVAGMALLL), 272–292 (IVVFAALASTILGAVAAIGQT), 297–317 (LLAYSSINNVGFALFGLAAGS), 323–343 (ATMTYMAVYVAMTLGSFICVL), 369–389 (LAAAFAIFMFSLAGIPPLFGF), 403–423 (GFWPLAMVGIATSVIGAFYYL), and 449–469 (GLITLAALAVSPLGYLAIPLL).

This sequence belongs to the complex I subunit 2 family. In terms of assembly, NDH-1 is composed of 14 different subunits. Subunits NuoA, H, J, K, L, M, N constitute the membrane sector of the complex.

It localises to the cell inner membrane. It carries out the reaction a quinone + NADH + 5 H(+)(in) = a quinol + NAD(+) + 4 H(+)(out). Its function is as follows. NDH-1 shuttles electrons from NADH, via FMN and iron-sulfur (Fe-S) centers, to quinones in the respiratory chain. The immediate electron acceptor for the enzyme in this species is believed to be ubiquinone. Couples the redox reaction to proton translocation (for every two electrons transferred, four hydrogen ions are translocated across the cytoplasmic membrane), and thus conserves the redox energy in a proton gradient. The protein is NADH-quinone oxidoreductase subunit N of Rhizorhabdus wittichii (strain DSM 6014 / CCUG 31198 / JCM 15750 / NBRC 105917 / EY 4224 / RW1) (Sphingomonas wittichii).